The sequence spans 793 residues: DnaJ homolog subfamily C member 10 (793 aa).

The first 32 residues, 1–32 (MGVWLNRDEFIRDVKRISLCLLVLYVVIVVGT), serve as a signal peptide directing secretion. Residues 35–100 (NFYSLLGVSK…DLRKKYDKYG (66 aa)) form the J domain. One can recognise a Thioredoxin 1 domain in the interval 130 to 232 (EIITLERREF…ESLVSFAMQH (103 aa)). Residues Cys-158 and Cys-161 are joined by a disulfide bond. Trxb stretches follow at residues 235 to 350 (TTVT…LPDF) and 348 to 463 (PDFE…PQNF). 3 consecutive Thioredoxin domains span residues 454 to 553 (HVTT…IEDL), 557 to 665 (SVVS…SWGL), and 671 to 776 (ASID…ALIY). Cysteines 480 and 483 form a disulfide. An N-linked (GlcNAc...) asparagine glycan is attached at Asn-530. Intrachain disulfides connect Cys-588-Cys-591 and Cys-700-Cys-703. The short motif at 790–793 (KDEL) is the Prevents secretion from ER element.

Interacts with HSPA5 (via its J domain). Interacts with EDEM1.

The protein localises to the endoplasmic reticulum lumen. In terms of biological role, endoplasmic reticulum disulfide reductase involved both in the correct folding of proteins and degradation of misfolded proteins. Required for efficient folding of proteins in the endoplasmic reticulum by catalyzing the removal of non-native disulfide bonds formed during the folding of proteins, such as LDLR. Also involved in endoplasmic reticulum-associated degradation (ERAD) by reducing incorrect disulfide bonds in misfolded glycoproteins recognized by EDEM1. Interaction with HSPA5 is required its activity, not for the disulfide reductase activity, but to facilitate the release of DNAJC10 from its substrate. Promotes apoptotic signaling pathway in response to endoplasmic reticulum stress. The sequence is that of DnaJ homolog subfamily C member 10 (Dnajc10) from Rattus norvegicus (Rat).